Reading from the N-terminus, the 650-residue chain is 1-deoxy-D-xylulose-5-phosphate synthase (650 aa).

Residues His73 and 113-115 (SHA) contribute to the thiamine diphosphate site. Residue Asp145 coordinates Mg(2+). Thiamine diphosphate contacts are provided by residues 146 to 147 (GA), Asn175, Tyr287, and Glu369. Asn175 is a binding site for Mg(2+). The segment at 629–650 (SARPLPEDAERVPMRAEDDEQA) is disordered. Positions 633 to 644 (LPEDAERVPMRA) are enriched in basic and acidic residues.

It belongs to the transketolase family. DXPS subfamily. As to quaternary structure, homodimer. Mg(2+) is required as a cofactor. Requires thiamine diphosphate as cofactor.

The catalysed reaction is D-glyceraldehyde 3-phosphate + pyruvate + H(+) = 1-deoxy-D-xylulose 5-phosphate + CO2. It participates in metabolic intermediate biosynthesis; 1-deoxy-D-xylulose 5-phosphate biosynthesis; 1-deoxy-D-xylulose 5-phosphate from D-glyceraldehyde 3-phosphate and pyruvate: step 1/1. Catalyzes the acyloin condensation reaction between C atoms 2 and 3 of pyruvate and glyceraldehyde 3-phosphate to yield 1-deoxy-D-xylulose-5-phosphate (DXP). The polypeptide is 1-deoxy-D-xylulose-5-phosphate synthase (Clavibacter sepedonicus (Clavibacter michiganensis subsp. sepedonicus)).